A 185-amino-acid chain; its full sequence is Urease accessory protein UreE (185 aa).

The disordered stretch occupies residues 153-185 (LRANSAQGHGHSHSHSHDHHGYHHHGDGNWHKH). A compositionally biased stretch (basic residues) spans 162 to 175 (GHSHSHSHDHHGYH). A compositionally biased stretch (basic and acidic residues) spans 176–185 (HHGDGNWHKH).

This sequence belongs to the UreE family.

Its subcellular location is the cytoplasm. Its function is as follows. Involved in urease metallocenter assembly. Binds nickel. Probably functions as a nickel donor during metallocenter assembly. In Haemophilus influenzae (strain PittGG), this protein is Urease accessory protein UreE.